The chain runs to 448 residues: Adenylosuccinate synthetase (448 aa).

GTP contacts are provided by residues 22-28 (GDEGKGK) and 50-52 (GHT). Catalysis depends on aspartate 23, which acts as the Proton acceptor. Residues aspartate 23 and glycine 50 each contribute to the Mg(2+) site. IMP-binding positions include 23–26 (DEGK), 48–51 (NAGH), threonine 139, arginine 153, glutamine 234, threonine 249, and arginine 321. Histidine 51 functions as the Proton donor in the catalytic mechanism. 317 to 323 (SVTGRPR) is a binding site for substrate. Residues arginine 323, 349–351 (KLD), and 431–433 (STG) contribute to the GTP site.

The protein belongs to the adenylosuccinate synthetase family. Homodimer. Mg(2+) serves as cofactor.

The protein localises to the cytoplasm. It catalyses the reaction IMP + L-aspartate + GTP = N(6)-(1,2-dicarboxyethyl)-AMP + GDP + phosphate + 2 H(+). Its pathway is purine metabolism; AMP biosynthesis via de novo pathway; AMP from IMP: step 1/2. In terms of biological role, plays an important role in the de novo pathway of purine nucleotide biosynthesis. Catalyzes the first committed step in the biosynthesis of AMP from IMP. This Burkholderia thailandensis (strain ATCC 700388 / DSM 13276 / CCUG 48851 / CIP 106301 / E264) protein is Adenylosuccinate synthetase.